The primary structure comprises 610 residues: tRNA uridine 5-carboxymethylaminomethyl modification enzyme MnmG (610 aa).

14–19 (GAGHAG) provides a ligand contact to FAD. Residue 274 to 288 (GPRYCPSIEDKIVKF) participates in NAD(+) binding.

The protein belongs to the MnmG family. In terms of assembly, homodimer. Heterotetramer of two MnmE and two MnmG subunits. It depends on FAD as a cofactor.

The protein resides in the cytoplasm. Its function is as follows. NAD-binding protein involved in the addition of a carboxymethylaminomethyl (cmnm) group at the wobble position (U34) of certain tRNAs, forming tRNA-cmnm(5)s(2)U34. The chain is tRNA uridine 5-carboxymethylaminomethyl modification enzyme MnmG from Chlamydia trachomatis serovar L2b (strain UCH-1/proctitis).